The chain runs to 221 residues: Oxaloacetate tautomerase FAHD1, mitochondrial (221 aa).

The N-terminal 24 residues, 1-24, are a transit peptide targeting the mitochondrion; the sequence is MASTKPLSRFWEWGKNIVCVGRNY. Ser37 carries the phosphoserine modification. Glu68, Glu70, and Asp99 together coordinate Mg(2+). Lys110 is modified (N6-acetyllysine). Lys112 is subject to N6-succinyllysine.

This sequence belongs to the FAH family. As to quaternary structure, homodimer. The cofactor is Mg(2+). Mn(2+) is required as a cofactor.

The protein resides in the mitochondrion. It localises to the cytoplasm. The protein localises to the cytosol. The catalysed reaction is oxaloacetate = enol-oxaloacetate. It catalyses the reaction oxaloacetate + H(+) = pyruvate + CO2. The enzyme catalyses a 3-acylpyruvate + H2O = a carboxylate + pyruvate + H(+). It carries out the reaction acetylpyruvate + H2O = acetate + pyruvate + H(+). The catalysed reaction is 3-fumarylpyruvate + H2O = fumarate + pyruvate + H(+). Its activity is regulated as follows. Oxaloacetate decarboxylation is competitively inhibited by oxalate. In terms of biological role, tautomerase that converts enol-oxaloacetate, a strong inhibitor of succinate dehydrogenase, to the physiological keto form of oxaloacetate. It is thereby required to maximize aerobic respiration efficiency by preventing succinate dehydrogenase inhibition. Also acts as a weak oxaloacetate decarboxylase (ODx), catalyzing the decarboxylation of oxaloacetate (OAA) to pyruvate and CO(2), and as such is likely a regulatory enzyme in the TCA cycle. Also displays acylpyruvase activity, being able to hydrolyze acetylpyruvate and fumarylpyruvate in vitro. The chain is Oxaloacetate tautomerase FAHD1, mitochondrial from Rattus norvegicus (Rat).